The sequence spans 340 residues: MQNYTLSQIAELLSAELQGDGALEITKIATLAHARSGHIAFLANKKYRSQLEVTQASAVIVSEADAPYFNGNKLIVANPYVSYAKLAQLMDTTPRSAATGIHPSAVVHPNATVSKSAAIGANTVIESNAIINDNVQIGPNSFIGEGVKIGSGTKLWSNVTIYHNVEIGSDCLLQANSVIGSDGFGYANERGQWIKIPQLGSVIIGDKVEIGASTTIDRGALDDTIIHSNVIIDNQCQIAHNVEVNSGTAIAGCTVLAGSVTIGKNCQIGGMTAINGHMSVCDGVIITGMSMVTKSITEPGIYSSGIPHTTNKEWRKSIAHLRNLSEMKSRIKALEQLNKP.

The active-site Proton acceptor is His-240.

Belongs to the transferase hexapeptide repeat family. LpxD subfamily. As to quaternary structure, homotrimer.

The enzyme catalyses a UDP-3-O-[(3R)-3-hydroxyacyl]-alpha-D-glucosamine + a (3R)-hydroxyacyl-[ACP] = a UDP-2-N,3-O-bis[(3R)-3-hydroxyacyl]-alpha-D-glucosamine + holo-[ACP] + H(+). It functions in the pathway bacterial outer membrane biogenesis; LPS lipid A biosynthesis. Its function is as follows. Catalyzes the N-acylation of UDP-3-O-acylglucosamine using 3-hydroxyacyl-ACP as the acyl donor. Is involved in the biosynthesis of lipid A, a phosphorylated glycolipid that anchors the lipopolysaccharide to the outer membrane of the cell. The polypeptide is UDP-3-O-acylglucosamine N-acyltransferase (Pseudoalteromonas translucida (strain TAC 125)).